The following is a 266-amino-acid chain: Small ribosomal subunit protein uS2 (266 aa).

Residues 229 to 254 (RTSDKEADTTTEEVAQEEVTDTKADE) are disordered. Over residues 237 to 247 (TTTEEVAQEEV) the composition is skewed to acidic residues.

Belongs to the universal ribosomal protein uS2 family.

In Flavobacterium psychrophilum (strain ATCC 49511 / DSM 21280 / CIP 103535 / JIP02/86), this protein is Small ribosomal subunit protein uS2.